The chain runs to 612 residues: Rhamnogalacturonan exolyase YesX (612 aa).

Asparagine 119 provides a ligand contact to substrate. 6 residues coordinate Ca(2+): aspartate 120, aspartate 125, aspartate 127, aspartate 129, glutamate 131, and glutamate 133. Substrate-binding residues include aspartate 139, glutamate 154, and arginine 174. Positions 189, 191, 193, 195, and 197 each coordinate Ca(2+). Residues glycine 205 and arginine 222 each coordinate substrate. 16 residues coordinate Ca(2+): histidine 330, aspartate 336, aspartate 338, aspartate 340, lysine 342, glutamate 344, aspartate 353, histidine 354, histidine 366, aspartate 368, aspartate 374, aspartate 376, arginine 379, glycine 381, glutamate 383, and glutamate 389. Substrate is bound at residue arginine 419. 4 residues coordinate Ca(2+): aspartate 472, aspartate 474, valine 476, and glutamate 478. A substrate-binding site is contributed by 516 to 518 (NGT). Residues asparagine 527, phenylalanine 529, aspartate 531, arginine 533, glutamate 535, asparagine 576, and alanine 578 each coordinate Ca(2+). Position 579 (tyrosine 579) interacts with substrate. Asparagine 580 serves as a coordination point for Ca(2+).

The protein belongs to the polysaccharide lyase 11 family. In terms of assembly, monomer. Mn(2+) serves as cofactor. The cofactor is Zn(2+). It depends on Co(2+) as a cofactor. Ca(2+) is required as a cofactor.

It localises to the secreted. It catalyses the reaction Exotype eliminative cleavage of alpha-L-rhamnopyranosyl-(1-&gt;4)-alpha-D-galactopyranosyluronic acid bonds of rhamnogalacturonan I oligosaccharides containing alpha-L-rhamnopyranose at the reducing end and 4-deoxy-4,5-unsaturated D-galactopyranosyluronic acid at the non-reducing end. The products are the disaccharide 2-O-(4-deoxy-beta-L-threo-hex-4-enopyranuronosyl)-alpha-L-rhamnopyranose and the shortened rhamnogalacturonan oligosaccharide containing one 4-deoxy-4,5-unsaturated D-galactopyranosyluronic acid at the non-reducing end.. Functionally, pectinolytic enzyme that degrades type I rhamnogalacturonan from plant cell walls and releases disaccharide products. Degrades rhamnogalacturonan, polygalacturonic acid and pectic acid. Has very low activity on pectin. In Bacillus subtilis (strain 168), this protein is Rhamnogalacturonan exolyase YesX (yesX).